The sequence spans 358 residues: MAAEAWLWRWGWGWGQRCPGRPGLPGPGPSPTTFLHLLLLLGPVAADITDGNSEHLKREHSLIKPYQGVGSSSMPLWDFQGSTMLTSQYVRLTPDERSKEGSIWNHQPCFLKDWEMHVHFKVHGTGKKNLHGDGIALWYTRDRLVPGPVFGSKDNFHGLAIFLDTYPNDETTERVFPYISVMVNNGSLSYDHSKDGRWSELAGCTADFRNRDHDTFLAVRYSRGRLTVMTDLEDKNEWKNCIDITGVRLPTGYYFGASAGTGDLSDNHDIISIKLFQLTVERTPEEESIDWTKIEPGVNFLKSPKDNVDDPTGNFRNGPLTGWRVFLLLLCALLGVVVCAVVGAVVFQKRQERNKRFY.

An N-terminal signal peptide occupies residues 1–46 (MAAEAWLWRWGWGWGQRCPGRPGLPGPGPSPTTFLHLLLLLGPVAA). Residues 47-324 (DITDGNSEHL…FRNGPLTGWR (278 aa)) are Lumenal-facing. The region spanning 54–278 (EHLKREHSLI…DIISIKLFQL (225 aa)) is the L-type lectin-like domain. A carbohydrate-binding residues include Ser98 and Asp133. Positions 164, 166, and 168 each coordinate Ca(2+). 166-168 (YPN) contacts a carbohydrate. The N-linked (GlcNAc...) asparagine glycan is linked to Asn185. An a carbohydrate-binding site is contributed by His192. Asp195 provides a ligand contact to Ca(2+). Cys204 and Cys241 are joined by a disulfide. Residue 262–264 (GDL) coordinates a carbohydrate. A helical membrane pass occupies residues 325 to 347 (VFLLLLCALLGVVVCAVVGAVVF). Residues 348–358 (QKRQERNKRFY) are Cytoplasmic-facing.

Ca(2+) is required as a cofactor.

It localises to the golgi apparatus membrane. Its function is as follows. Plays a role as an intracellular lectin in the early secretory pathway. Interacts with N-acetyl-D-galactosamine and high-mannose type glycans and may also bind to O-linked glycans. Involved in the transport and sorting of glycoproteins carrying high mannose-type glycans. The chain is Vesicular integral-membrane protein VIP36 (Lman2) from Mus musculus (Mouse).